A 237-amino-acid polypeptide reads, in one-letter code: Uridylate kinase (237 aa).

11-14 is an ATP binding site; the sequence is KLSG. UMP is bound at residue Gly-53. ATP-binding residues include Gly-54 and Arg-58. UMP is bound by residues Asp-73 and 134–141; that span reads TGNPFFTT. The ATP site is built by Thr-161, Tyr-167, and Asp-170.

The protein belongs to the UMP kinase family. In terms of assembly, homohexamer.

The protein localises to the cytoplasm. It catalyses the reaction UMP + ATP = UDP + ADP. It functions in the pathway pyrimidine metabolism; CTP biosynthesis via de novo pathway; UDP from UMP (UMPK route): step 1/1. With respect to regulation, inhibited by UTP. Functionally, catalyzes the reversible phosphorylation of UMP to UDP. In Paraburkholderia xenovorans (strain LB400), this protein is Uridylate kinase.